Consider the following 251-residue polypeptide: Uridylate kinase (251 aa).

Residue 24–27 (KISG) coordinates ATP. The segment at 32 to 37 (GDQGFG) is involved in allosteric activation by GTP. A UMP-binding site is contributed by G66. Residues G67 and R71 each coordinate ATP. Residues D86 and 147–154 (TGNPYFTT) contribute to the UMP site. Positions 175, 181, and 184 each coordinate ATP.

It belongs to the UMP kinase family. In terms of assembly, homohexamer.

It localises to the cytoplasm. The enzyme catalyses UMP + ATP = UDP + ADP. Its pathway is pyrimidine metabolism; CTP biosynthesis via de novo pathway; UDP from UMP (UMPK route): step 1/1. Allosterically activated by GTP. Inhibited by UTP. Its function is as follows. Catalyzes the reversible phosphorylation of UMP to UDP. This Ruegeria pomeroyi (strain ATCC 700808 / DSM 15171 / DSS-3) (Silicibacter pomeroyi) protein is Uridylate kinase.